The chain runs to 321 residues: Phospho-N-acetylmuramoyl-pentapeptide-transferase (321 aa).

10 consecutive transmembrane segments (helical) span residues 1–21, 50–70, 76–96, 112–132, 140–160, 176–196, 200–220, 225–245, 250–270, and 300–320; these read MIFI…PILI, MGGL…IIFV, IILL…DDYI, FLAQ…FHLV, IPFV…IVFW, GLAT…SYML, AIGI…PYNL, VFMG…ISIM, LSLI…MLQV, and VVTV…WIGV.

This sequence belongs to the glycosyltransferase 4 family. MraY subfamily. Mg(2+) is required as a cofactor.

The protein localises to the cell membrane. The catalysed reaction is UDP-N-acetyl-alpha-D-muramoyl-L-alanyl-gamma-D-glutamyl-L-lysyl-D-alanyl-D-alanine + di-trans,octa-cis-undecaprenyl phosphate = Mur2Ac(oyl-L-Ala-gamma-D-Glu-L-Lys-D-Ala-D-Ala)-di-trans,octa-cis-undecaprenyl diphosphate + UMP. It functions in the pathway cell wall biogenesis; peptidoglycan biosynthesis. Catalyzes the initial step of the lipid cycle reactions in the biosynthesis of the cell wall peptidoglycan: transfers peptidoglycan precursor phospho-MurNAc-pentapeptide from UDP-MurNAc-pentapeptide onto the lipid carrier undecaprenyl phosphate, yielding undecaprenyl-pyrophosphoryl-MurNAc-pentapeptide, known as lipid I. The sequence is that of Phospho-N-acetylmuramoyl-pentapeptide-transferase from Staphylococcus epidermidis (strain ATCC 12228 / FDA PCI 1200).